The sequence spans 340 residues: Ketol-acid reductoisomerase (NADP(+)) (340 aa).

Residues 2 to 182 (AELYYDNQAD…GCTRAGVLRT (181 aa)) form the KARI N-terminal Rossmann domain. NADP(+) is bound by residues 25 to 28 (FGSQ), serine 51, serine 53, and 83 to 86 (DIGQ). Histidine 108 is an active-site residue. Glycine 134 contributes to the NADP(+) binding site. The 146-residue stretch at 183-328 (TFAEETETDL…RELRRMMPFV (146 aa)) folds into the KARI C-terminal knotted domain. Mg(2+) contacts are provided by aspartate 191, glutamate 195, glutamate 227, and glutamate 231. Serine 252 is a substrate binding site.

The protein belongs to the ketol-acid reductoisomerase family. Requires Mg(2+) as cofactor.

The enzyme catalyses (2R)-2,3-dihydroxy-3-methylbutanoate + NADP(+) = (2S)-2-acetolactate + NADPH + H(+). It catalyses the reaction (2R,3R)-2,3-dihydroxy-3-methylpentanoate + NADP(+) = (S)-2-ethyl-2-hydroxy-3-oxobutanoate + NADPH + H(+). It functions in the pathway amino-acid biosynthesis; L-isoleucine biosynthesis; L-isoleucine from 2-oxobutanoate: step 2/4. The protein operates within amino-acid biosynthesis; L-valine biosynthesis; L-valine from pyruvate: step 2/4. Its function is as follows. Involved in the biosynthesis of branched-chain amino acids (BCAA). Catalyzes an alkyl-migration followed by a ketol-acid reduction of (S)-2-acetolactate (S2AL) to yield (R)-2,3-dihydroxy-isovalerate. In the isomerase reaction, S2AL is rearranged via a Mg-dependent methyl migration to produce 3-hydroxy-3-methyl-2-ketobutyrate (HMKB). In the reductase reaction, this 2-ketoacid undergoes a metal-dependent reduction by NADPH to yield (R)-2,3-dihydroxy-isovalerate. In Chloroflexus aggregans (strain MD-66 / DSM 9485), this protein is Ketol-acid reductoisomerase (NADP(+)).